A 182-amino-acid polypeptide reads, in one-letter code: Ferritin heavy chain (182 aa).

An N-acetylmethionine modification is found at Met1. Position 2 is an N-acetylthreonine; in Ferritin heavy chain, N-terminally processed (Thr2). One can recognise a Ferritin-like diiron domain in the interval 11-160 (QNYHQDSEAA…DHVTNLRRMG (150 aa)). Fe cation-binding residues include Glu28, Glu63, His66, Glu108, and Gln142.

Belongs to the ferritin family. As to quaternary structure, oligomer of 24 subunits. There are two types of subunits: L (light) chain and H (heavy) chain. The major chain can be light or heavy, depending on the species and tissue type. The functional molecule forms a roughly spherical shell with a diameter of 12 nm and contains a central cavity into which the insoluble mineral iron core is deposited. Interacts with NCOA4; NCOA4 promotes targeting of the iron-binding ferritin complex to autolysosomes following starvation or iron depletion.

The protein localises to the cytoplasm. It is found in the lysosome. Its subcellular location is the cytoplasmic vesicle. The protein resides in the autophagosome. It carries out the reaction 4 Fe(2+) + O2 + 4 H(+) = 4 Fe(3+) + 2 H2O. In terms of biological role, stores iron in a soluble, non-toxic, readily available form. Important for iron homeostasis. Has ferroxidase activity. Iron is taken up in the ferrous form and deposited as ferric hydroxides after oxidation. Also plays a role in delivery of iron to cells. Mediates iron uptake in capsule cells of the developing kidney. Delivery to lysosomes is mediated by the cargo receptor NCOA4 for autophagic degradation and release of iron. The sequence is that of Ferritin heavy chain (FTH1) from Equus caballus (Horse).